A 205-amino-acid polypeptide reads, in one-letter code: Proteasome subunit beta type-3 (205 aa).

N-acetylserine is present on Ser2. The residue at position 77 (Lys77) is an N6-acetyllysine.

The protein belongs to the peptidase T1B family. In terms of assembly, the 26S proteasome consists of a 20S proteasome core and two 19S regulatory subunits. The 20S proteasome core is a barrel-shaped complex made of 28 subunits that are arranged in four stacked rings. The two outer rings are each formed by seven alpha subunits, and the two inner rings are formed by seven beta subunits. The proteolytic activity is exerted by three beta-subunits PSMB5, PSMB6 and PSMB7. In terms of tissue distribution, detected in liver (at protein level).

The protein localises to the cytoplasm. It is found in the nucleus. In terms of biological role, non-catalytic component of the 20S core proteasome complex involved in the proteolytic degradation of most intracellular proteins. This complex plays numerous essential roles within the cell by associating with different regulatory particles. Associated with two 19S regulatory particles, forms the 26S proteasome and thus participates in the ATP-dependent degradation of ubiquitinated proteins. The 26S proteasome plays a key role in the maintenance of protein homeostasis by removing misfolded or damaged proteins that could impair cellular functions, and by removing proteins whose functions are no longer required. Associated with the PA200 or PA28, the 20S proteasome mediates ubiquitin-independent protein degradation. This type of proteolysis is required in several pathways including spermatogenesis (20S-PA200 complex) or generation of a subset of MHC class I-presented antigenic peptides (20S-PA28 complex). The chain is Proteasome subunit beta type-3 (Psmb3) from Mus musculus (Mouse).